The chain runs to 469 residues: Probable Xaa-Pro aminopeptidase PEPP (469 aa).

D257, D268, E391, and E436 together coordinate Mn(2+).

It belongs to the peptidase M24B family. It depends on Mn(2+) as a cofactor.

The catalysed reaction is Release of any N-terminal amino acid, including proline, that is linked to proline, even from a dipeptide or tripeptide.. Functionally, catalyzes the removal of a penultimate prolyl residue from the N-termini of peptides. The chain is Probable Xaa-Pro aminopeptidase PEPP (PEPP) from Fusarium vanettenii (strain ATCC MYA-4622 / CBS 123669 / FGSC 9596 / NRRL 45880 / 77-13-4) (Fusarium solani subsp. pisi).